Here is a 395-residue protein sequence, read N- to C-terminus: Zinc-regulated GTPase metalloprotein activator 1E (395 aa).

A disordered region spans residues 1–22; that stretch reads MLPAVGSVDEEEDPAEEDCPEL. Positions 8 to 20 are enriched in acidic residues; that stretch reads VDEEEDPAEEDCP. The psi-PxLVp motif motif lies at 17–24; that stretch reads EDCPELVP. Residue 49 to 56 participates in GTP binding; the sequence is GYLGAGKT. Zn(2+) is bound by residues cysteine 107, cysteine 109, and cysteine 110. The CXCC motif signature appears at 107 to 110; sequence CLCC. GTP-binding positions include 110-114 and 203-206; these read CSVKD and NKTD. The CobW C-terminal domain occupies 274-377; the sequence is IVTITFEVPG…ILKQLFIATV (104 aa).

This sequence belongs to the SIMIBI class G3E GTPase family. ZNG1 subfamily.

The protein resides in the nucleus. The catalysed reaction is GTP + H2O = GDP + phosphate + H(+). Functionally, zinc chaperone that directly transfers zinc cofactor to target metalloproteins, thereby activating them. Catalyzes zinc insertion into the active site of methionine aminopeptidase METAP1, which function to cleave the initiator methionine from polypeptides during or after protein translation. Mechanistically, the N-terminal psi-PxLVp motif binds to the C6H2-type zinc finger of inactive form of METAP1. After formation of the docked complex, zinc is transferred from the CXCC motif in the GTPase domain of ZNG1E to the zinc binding site in the peptidase domain of METAP1 in a process requiring GTP hydrolysis. GTP/GDP exchange is required for release of active METAP1. The sequence is that of Zinc-regulated GTPase metalloprotein activator 1E from Homo sapiens (Human).